The sequence spans 337 residues: Phosphatidylglycerophosphate phosphatase PTPMT1 (337 aa).

The tract at residues 1-20 (MYIKELTETDEEKRERSVED) is disordered. Substrate contacts are provided by tyrosine 55 and aspartate 133. The 148-residue stretch at 73-220 (WWDRVAEFIL…VVEYYHVKVL (148 aa)) folds into the Tyrosine-protein phosphatase domain. Cysteine 164 acts as the Phosphocysteine intermediate in catalysis. Residues 164–170 (CKAGRGR) carry the Glucan phosphatase signature motif CXAGXGR motif. 165–170 (KAGRGR) provides a ligand contact to substrate.

It belongs to the protein-tyrosine phosphatase family. Non-receptor class dual specificity subfamily. In terms of tissue distribution, expressed in stems, roots, flowers, mature seeds and leaves.

The catalysed reaction is O-phospho-L-seryl-[protein] + H2O = L-seryl-[protein] + phosphate. It catalyses the reaction O-phospho-L-threonyl-[protein] + H2O = L-threonyl-[protein] + phosphate. The enzyme catalyses O-phospho-L-tyrosyl-[protein] + H2O = L-tyrosyl-[protein] + phosphate. It carries out the reaction a 1,2-diacyl-sn-glycero-3-phospho-(1'-sn-glycero-3'-phosphate) + H2O = a 1,2-diacyl-sn-glycero-3-phospho-(1'-sn-glycerol) + phosphate. The protein operates within phospholipid metabolism; phosphatidylglycerol biosynthesis; phosphatidylglycerol from CDP-diacylglycerol: step 2/2. Its function is as follows. Exhibits phosphatidylglycerophosphate phosphatase activity. Involved in root growth and columella cells organization. May possess protein phosphatase activity. The polypeptide is Phosphatidylglycerophosphate phosphatase PTPMT1 (Arabidopsis thaliana (Mouse-ear cress)).